The primary structure comprises 55 residues: uncharacterized protein (55 aa).

The chain crosses the membrane as a helical span at residues 27–44; it reads SFWFILISASSFLIYSLF.

It localises to the membrane. This is an uncharacterized protein from Dictyostelium discoideum (Social amoeba).